The primary structure comprises 200 residues: Dephospho-CoA kinase (200 aa).

Positions 4-200 (VIGLTGGIAS…VILKNWNIID (197 aa)) constitute a DPCK domain. ATP is bound at residue 12 to 17 (ASGKST).

This sequence belongs to the CoaE family.

It is found in the cytoplasm. It catalyses the reaction 3'-dephospho-CoA + ATP = ADP + CoA + H(+). The protein operates within cofactor biosynthesis; coenzyme A biosynthesis; CoA from (R)-pantothenate: step 5/5. Catalyzes the phosphorylation of the 3'-hydroxyl group of dephosphocoenzyme A to form coenzyme A. In Bacillus cereus (strain ATCC 10987 / NRS 248), this protein is Dephospho-CoA kinase.